We begin with the raw amino-acid sequence, 379 residues long: Serine/threonine-protein kinase spe-6 (379 aa).

The 277-residue stretch at 26 to 302 folds into the Protein kinase domain; the sequence is WKVLRNIYSG…SQAATEHQVT (277 aa). Residues 32 to 40 and lysine 55 contribute to the ATP site; that span reads IYSGPFSDV. Aspartate 147 serves as the catalytic Proton acceptor. Residues 331 to 379 are disordered; sequence ASAKLDAKDNANESMDIEFDDMPPKEGISKSLSAEKSCTKNVETARTEK. Residues 360–372 show a composition bias toward polar residues; it reads KSLSAEKSCTKNV.

Belongs to the protein kinase superfamily. CK1 Ser/Thr protein kinase family.

The catalysed reaction is L-seryl-[protein] + ATP = O-phospho-L-seryl-[protein] + ADP + H(+). It catalyses the reaction L-threonyl-[protein] + ATP = O-phospho-L-threonyl-[protein] + ADP + H(+). Functionally, serine/threonine-protein kinase which is involved in spermatogenesis. In spermatocytes, regulates meiosis and the localization and assembly of major sperm protein (MSP) into fibrous bodies. In addition, may suppress the initiation of spermiogenesis downstream of spe-8, spe-12, spe-27 and spe-29. In Caenorhabditis elegans, this protein is Serine/threonine-protein kinase spe-6.